A 769-amino-acid polypeptide reads, in one-letter code: Dolichyl-phosphate-mannose--protein mannosyltransferase 2 (769 aa).

The segment at 1 to 44 (MSTSVEPNETEALLRKQNDLSTTASIEEKYPHQQGEAAEDDDDT) is disordered. Asn8 is a glycosylation site (N-linked (GlcNAc...) asparagine). Residues 59 to 79 (SLKQVESILAPIVFTALSFFV) form a helical membrane-spanning segment. N-linked (GlcNAc...) asparagine glycosylation is present at Asn132. 3 consecutive transmembrane segments (helical) span residues 152 to 169 (MRLFNATFSALCVPLAYF), 176 to 194 (FSMFTTWLFTLMVALESSY), and 200 to 218 (FILLDSMLLFFTVATVFCF). The N-linked (GlcNAc...) asparagine glycan is linked to Asn226. 2 consecutive transmembrane segments (helical) span residues 252-272 (VKMVGLFVTTLVGIYTVVDLW) and 288-308 (HWFARIVALILVPIFIFMLSF). N-linked (GlcNAc...) asparagine glycosylation occurs at Asn324. One can recognise an MIR 1 domain in the interval 342-397 (PREVSMFHSVITLKNQGLSGGLLHSHVQTFPEGSKQQQVTTYGHKDSNNNWIFQRA). Residues Asn408, Asn453, and Asn462 are each glycosylated (N-linked (GlcNAc...) asparagine). MIR domains lie at 412–468 (IEYI…VEIM) and 474–534 (EDKM…IENN). 4 helical membrane-spanning segments follow: residues 615–635 (TTWTSTVGVILFAFIVLYYLI), 655–675 (FLMGGIYPMFGWGLHFLPFAI), 679–699 (VTYVHHYVPALYFAMLVFCYE), and 718–738 (LLYLAIYIGLLSLVAGTFWYF).

Belongs to the glycosyltransferase 39 family. PMT1 and PMT2 form a functional heterodimer.

Its subcellular location is the endoplasmic reticulum membrane. The enzyme catalyses a di-trans,poly-cis-dolichyl beta-D-mannosyl phosphate + L-seryl-[protein] = 3-O-(alpha-D-mannosyl)-L-seryl-[protein] + a di-trans,poly-cis-dolichyl phosphate + H(+). It catalyses the reaction a di-trans,poly-cis-dolichyl beta-D-mannosyl phosphate + L-threonyl-[protein] = 3-O-(alpha-D-mannosyl)-L-threonyl-[protein] + a di-trans,poly-cis-dolichyl phosphate + H(+). It functions in the pathway protein modification; protein glycosylation. In terms of biological role, protein mannosyltransferase (PMT) involved in hyphal growth and drug sensitivity. Transfers mannose from Dol-P-mannose to Ser or Thr residues on proteins. PMT1, PMT2 and PMT4 account for most of the protein-O-glycosylation activity, while PMT5 and PMT6 may specifically modulate a much narrower spectrum of target proteins. Essential protein that plays an important role in virulence. The sequence is that of Dolichyl-phosphate-mannose--protein mannosyltransferase 2 from Candida albicans (strain SC5314 / ATCC MYA-2876) (Yeast).